Here is a 271-residue protein sequence, read N- to C-terminus: Putative hydro-lyase Mrad2831_3350 (271 aa).

Belongs to the D-glutamate cyclase family.

The sequence is that of Putative hydro-lyase Mrad2831_3350 from Methylobacterium radiotolerans (strain ATCC 27329 / DSM 1819 / JCM 2831 / NBRC 15690 / NCIMB 10815 / 0-1).